The primary structure comprises 80 residues: RNA-binding protein Hfq (80 aa).

In terms of domain architecture, Sm spans 9–68; that stretch reads EPFLNALRKERIPVSIYLVNGIKLQGQIDSFDQFVVLLKNTVSQMVYKHAISTIVPSRPV.

The protein belongs to the Hfq family. Homohexamer.

RNA chaperone that binds small regulatory RNA (sRNAs) and mRNAs to facilitate mRNA translational regulation in response to envelope stress, environmental stress and changes in metabolite concentrations. Also binds with high specificity to tRNAs. This is RNA-binding protein Hfq from Thioalkalivibrio sulfidiphilus (strain HL-EbGR7).